A 379-amino-acid chain; its full sequence is Homoserine O-succinyltransferase (379 aa).

Residues 51–360 enclose the AB hydrolase-1 domain; the sequence is NAVLICHALS…DSPYGHDAFL (310 aa). The active-site Nucleophile is Ser157. Arg227 provides a ligand contact to substrate. Catalysis depends on residues Asp323 and His356. Asp357 is a substrate binding site.

The protein belongs to the AB hydrolase superfamily. MetX family. In terms of assembly, homodimer.

Its subcellular location is the cytoplasm. It catalyses the reaction L-homoserine + succinyl-CoA = O-succinyl-L-homoserine + CoA. It functions in the pathway amino-acid biosynthesis; L-methionine biosynthesis via de novo pathway; O-succinyl-L-homoserine from L-homoserine: step 1/1. Requires MetW for activity. Transfers a succinyl group from succinyl-CoA to L-homoserine, forming succinyl-L-homoserine. This chain is Homoserine O-succinyltransferase, found in Pseudomonas putida (strain ATCC 47054 / DSM 6125 / CFBP 8728 / NCIMB 11950 / KT2440).